The sequence spans 270 residues: Esterase (270 aa).

Catalysis depends on charge relay system residues S127, D216, and H244.

It belongs to the LovG family.

It participates in mycotoxin biosynthesis. Functionally, esterase; part of the gene cluster that mediates the biosynthesis of the selective antifungal agent ascochitine, an o-quinone methide that plays a possible protective role against other microbial competitors in nature and is considered to be important for pathogenicity of legume-associated Didymella species. The pathway probably begins with the synthesis of a keto-aldehyde intermediate by the ascochitine non-reducing polyketide synthase pksAC from successive condensations of 4 malonyl-CoA units, presumably with a simple acetyl-CoA starter unit. Release of the keto-aldehyde intermediate is consistent with the presence of the C-terminal reductive release domain. The HR-PKS (orf7) probably makes a diketide starter unit which is passed to the non-reducing polyketide synthase pksAC for further extension, producing ascochital and ascochitine. The aldehyde dehydrogenase (orf1), the 2-oxoglutarate-dependent dioxygenase (orf3) and the dehydrogenase (orf9) are probably involved in subsequent oxidations of methyl groups to the carboxylic acid of the heterocyclic ring. The ascochitine gene cluster also includes a gene encoding a short peptide with a cupin domain (orf2) that is often found in secondary metabolite gene clusters and which function has still to be determined. The sequence is that of Esterase from Didymella fabae (Leaf and pod spot disease fungus).